We begin with the raw amino-acid sequence, 281 residues long: NADPH-dependent 7-cyano-7-deazaguanine reductase (281 aa).

89 to 91 (VES) is a binding site for substrate. Position 91-92 (91-92 (SK)) interacts with NADPH. The Thioimide intermediate role is filled by C188. D195 serves as the catalytic Proton donor. 227-228 (HE) serves as a coordination point for substrate. Residue 256–257 (RG) coordinates NADPH.

Belongs to the GTP cyclohydrolase I family. QueF type 2 subfamily. Homodimer.

It localises to the cytoplasm. The catalysed reaction is 7-aminomethyl-7-carbaguanine + 2 NADP(+) = 7-cyano-7-deazaguanine + 2 NADPH + 3 H(+). It participates in tRNA modification; tRNA-queuosine biosynthesis. In terms of biological role, catalyzes the NADPH-dependent reduction of 7-cyano-7-deazaguanine (preQ0) to 7-aminomethyl-7-deazaguanine (preQ1). The protein is NADPH-dependent 7-cyano-7-deazaguanine reductase of Azoarcus sp. (strain BH72).